A 513-amino-acid polypeptide reads, in one-letter code: Xyloglucan 6-xylosyltransferase 4 (513 aa).

Topologically, residues 1-39 (MFQDGSRSSGSGRGLSTTAVSNGGWRTRGFLRGWQIQNT) are cytoplasmic. A helical; Signal-anchor for type II membrane protein transmembrane segment spans residues 40–60 (LFNNIKFMILCCFVTILILLG). The Lumenal segment spans residues 61-513 (TIRVGNLGSS…IRRMHMETKP (453 aa)). N-linked (GlcNAc...) asparagine glycosylation is found at asparagine 76, asparagine 110, asparagine 142, asparagine 174, and asparagine 490.

Belongs to the glycosyltransferase 34 family.

The protein localises to the golgi apparatus membrane. The catalysed reaction is Transfers an alpha-D-xylosyl residue from UDP-D-xylose to a glucose residue in xyloglucan, forming an alpha-(1-&gt;6)-D-xylosyl-D-glucose linkage.. Xylosyltransferase specific to UDP-D-xylose that accepts cellohexaose as substrate to produce xyloglucan. The sequence is that of Xyloglucan 6-xylosyltransferase 4 from Arabidopsis thaliana (Mouse-ear cress).